The chain runs to 119 residues: uncharacterized protein (119 aa).

A helical membrane pass occupies residues 30–50 (LMTLPCVLFLSSFGQAVIVVL).

The protein localises to the membrane. This is an uncharacterized protein from Saccharomyces cerevisiae (strain ATCC 204508 / S288c) (Baker's yeast).